A 259-amino-acid polypeptide reads, in one-letter code: Chloroplastic import inner membrane translocase subunit HP30-2 (259 aa).

A run of 4 helical transmembrane segments spans residues 55 to 75 (AVVT…MGTL), 108 to 124 (NFAA…CVMK), 135 to 155 (AVVA…GLQG), and 158 to 178 (MNAI…FKLG).

The protein belongs to the Tim17/Tim22/Tim23 family. In terms of assembly, probable component of a protein-conducting channel made of HP30-1, HP30-2 and HP20 that mediates the import of transit sequence-less proteins into the chloroplastic inner membrane. Interacts with CEQORH.

The protein resides in the mitochondrion membrane. It is found in the plastid. The protein localises to the chloroplast inner membrane. Its function is as follows. Together with HP30-1 and HP20, triggers the import and insertion of transit sequence-less multi-pass transmembrane proteins (e.g. CEQORH) into the chloroplastic inner membrane. This chain is Chloroplastic import inner membrane translocase subunit HP30-2, found in Arabidopsis thaliana (Mouse-ear cress).